The sequence spans 103 residues: Large ribosomal subunit protein bL21 (103 aa).

It belongs to the bacterial ribosomal protein bL21 family. As to quaternary structure, part of the 50S ribosomal subunit. Contacts protein L20.

Functionally, this protein binds to 23S rRNA in the presence of protein L20. In Aeromonas salmonicida (strain A449), this protein is Large ribosomal subunit protein bL21.